The primary structure comprises 691 residues: NADPH--cytochrome P450 reductase (691 aa).

Topologically, residues 2–7 (PFGIDN) are lumenal. The helical transmembrane segment at 8–24 (TDFTVLAGLVLAVLLYV) threads the bilayer. Over 25-691 (KRNSIKELLM…TSGRYQEDVW (667 aa)) the chain is Cytoplasmic. One can recognise a Flavodoxin-like domain in the interval 61 to 204 (YLVLYASQTG…DYMAWKDSIL (144 aa)). FMN is bound by residues 67–72 (SQTGTA), Lys78, 116–119 (STYG), 152–161 (LGNSTYEFFN), and Asp187. The FAD-binding FR-type domain occupies 266–529 (SQPYIAPIVK…HVRRSNFRLP (264 aa)). Arg285 serves as a coordination point for NADP(+). FAD contacts are provided by residues 439-442 (RYYS), 457-459 (TSI), and 476-479 (GVTT). NADP(+) is bound by residues Thr543, 610 to 611 (SR), 617 to 621 (KVYVQ), and Asp646. A Glycyl lysine isopeptide (Lys-Gly) (interchain with G-Cter in ubiquitin) cross-link involves residue Lys666. Position 691 (Trp691) interacts with FAD.

The protein belongs to the NADPH--cytochrome P450 reductase family. This sequence in the N-terminal section; belongs to the flavodoxin family. It in the C-terminal section; belongs to the flavoprotein pyridine nucleotide cytochrome reductase family. Interacts with PCL1. Requires FAD as cofactor. It depends on FMN as a cofactor. In terms of processing, phosphorylated by the cyclin-CDK PCL1-PHO85.

The protein localises to the endoplasmic reticulum membrane. It localises to the mitochondrion outer membrane. It is found in the cell membrane. It carries out the reaction 2 oxidized [cytochrome P450] + NADPH = 2 reduced [cytochrome P450] + NADP(+) + H(+). This enzyme is required for electron transfer from NADP to cytochrome P450 in microsomes. It can also provide electron transfer to heme oxygenase and cytochrome B5. Involved in ergosterol biosynthesis. Has NADPH-dependent ferrireductase activity on the plasma membrane. The protein is NADPH--cytochrome P450 reductase of Saccharomyces cerevisiae (strain ATCC 204508 / S288c) (Baker's yeast).